The chain runs to 568 residues: ATP-dependent RNA helicase MRH4, mitochondrial (568 aa).

Residues 1 to 50 constitute a mitochondrion transit peptide; the sequence is MVSILAIRTFNPLGHFVSTQCVRAYAINSVRAGSKSSSVRAGSKNDTTRA. The segment covering 36–49 has biased composition (polar residues); the sequence is SSSVRAGSKNDTTR. Residues 36-64 form a disordered region; it reads SSSVRAGSKNDTTRASSKKNKAGKSKLQL. Residues 143–150 carry the Q motif motif; the sequence is EIHPSPIQ. The region spanning 160 to 348 is the Helicase ATP-binding domain; that stretch reads NLMEPKLQVH…TKMFPNAIPL (189 aa). ATP is bound at residue 173–180; sequence AETGSGKT. The DEAD box motif lies at 296–299; it reads DEAD. The Helicase C-terminal domain maps to 379–568; it reads ALAQTLYAIA…TILKKNKALT (190 aa).

Belongs to the DEAD box helicase family. MRH4 subfamily.

Its subcellular location is the mitochondrion. It carries out the reaction ATP + H2O = ADP + phosphate + H(+). In terms of biological role, ATP-binding RNA helicase involved in mitochondrial RNA metabolism. Required for maintenance of mitochondrial DNA. The chain is ATP-dependent RNA helicase MRH4, mitochondrial (MRH4) from Candida glabrata (strain ATCC 2001 / BCRC 20586 / JCM 3761 / NBRC 0622 / NRRL Y-65 / CBS 138) (Yeast).